A 736-amino-acid polypeptide reads, in one-letter code: Dynamin-1-like protein (736 aa).

An N-acetylmethionine modification is found at M1. In terms of domain architecture, Dynamin-type G spans 22-302 (IIQLPQIVVV…LMHHIRDCLP (281 aa)). Residues 32 to 39 (GTQSSGKS) form a G1 motif region. 32–40 (GTQSSGKSS) provides a ligand contact to GTP. The segment at 58 to 60 (VTR) is G2 motif. Residues 146-149 (DLPG) are G3 motif. The G4 motif stretch occupies residues 215-218 (TKLD). GTP-binding positions include 215–221 (TKLDLMD) and 246–249 (NRSQ). Residues 245–248 (VNRS) are G5 motif. The middle domain stretch occupies residues 344–489 (YCNTIEGTAK…NEMVHNLVAI (146 aa)). The interaction with GSK3B stretch occupies residues 448–685 (NYSTQELLRF…NHVKDTLQSE (238 aa)). A b domain region spans residues 502 to 569 (ADACGLMNNN…IQDNRRETKN (68 aa)). The segment at 522 to 554 (RELPSAGSRDKSSKVPSALAPASQEPPPAASAE) is disordered. S529 carries the post-translational modification Phosphoserine. Residues K532, K535, K558, and K568 each participate in a glycyl lysine isopeptide (Lys-Gly) (interchain with G-Cter in SUMO) cross-link. Residues 542 to 736 (PASQEPPPAA…IAEIRETHLW (195 aa)) form a C-terminal dimerization domain region. Residues 566–588 (ETKNVPSAGGGIGDGGQEPTTGN) form a disordered region. T585 and T586 each carry an O-linked (GlcNAc) threonine glycan. Residue K594 forms a Glycyl lysine isopeptide (Lys-Gly) (interchain with G-Cter in SUMO) linkage. K597 carries the post-translational modification N6-acetyllysine; alternate. Residue K597 forms a Glycyl lysine isopeptide (Lys-Gly) (interchain with G-Cter in SUMO); alternate linkage. Residue K606 forms a Glycyl lysine isopeptide (Lys-Gly) (interchain with G-Cter in SUMO) linkage. S607 carries the post-translational modification Phosphoserine. K608 is covalently cross-linked (Glycyl lysine isopeptide (Lys-Gly) (interchain with G-Cter in SUMO)). Position 616 is a phosphoserine; by PINK1 (S616). S637 is subject to Phosphoserine; by CAMK1 and PKA. C644 is modified (S-nitrosocysteine). The 92-residue stretch at 644 to 735 (CEVIERLIKS…IIAEIRETHL (92 aa)) folds into the GED domain. The important for homodimerization stretch occupies residues 654 to 668 (YFLIVRKNIQDSVPK).

This sequence belongs to the TRAFAC class dynamin-like GTPase superfamily. Dynamin/Fzo/YdjA family. Homotetramer; dimerizes through the N-terminal GTP-middle region of one molecule binding to the GED domain of another DNM1L molecule. Oligomerizes in a GTP-dependent manner to form membrane-associated tubules with a spiral pattern. Interacts with GSK3B and MARCHF5. Interacts (via the GTPase and B domains) with UBE2I; the interaction promotes sumoylation of DNM1L, mainly in its B domain. Interacts with PPP3CA; the interaction dephosphorylates DNM1L and regulates its transition to mitochondria. Interacts with BCL2L1 isoform BCL-X(L) and CLTA; DNM1L and BCL2L1 isoform BCL-X(L) may form a complex in synaptic vesicles that also contains clathrin and MFF. Interacts with MFF; the interaction is inhibited by C11orf65/MFI. Interacts with FIS1. Interacts with MIEF2 and MIEF1; GTP-dependent, regulates GTP hydrolysis and DNM1L oligomerization. Interacts with PGAM5; this interaction leads to dephosphorylation at Ser-656 and activation of GTPase activity and eventually to mitochondria fragmentation. Interacts with RALBP1; during mitosis, recruits DNM1L to the mitochondrion and mediates its activation by the mitotic kinase cyclin B-CDK1. Interacts with FUNDC1; this interaction recruits DNM1L/DRP1 at ER-mitochondria contact sites. Phosphorylation/dephosphorylation events on two sites near the GED domain regulate mitochondrial fission. Phosphorylation on Ser-637 inhibits mitochondrial fission probably through preventing intramolecular interaction. Dephosphorylated on this site by PPP3CA which promotes mitochondrial fission. Phosphorylation on Ser-616 by Pink1 activates the GTPase activity and promotes mitochondrial fission. Phosphorylated in a circadian manner at Ser-637. Dephosphorylated by PGAM5. Post-translationally, sumoylated on various lysine residues within the B domain, probably by MUL1. Sumoylation positively regulates mitochondrial fission. Desumoylated by SENP5 during G2/M transition of mitosis. Appears to be linked to its catalytic activity. In terms of processing, S-nitrosylation increases DNM1L dimerization, mitochondrial fission and causes neuronal damage. O-GlcNAcylation augments the level of the GTP-bound active form of DNM1L and induces translocation from the cytoplasm to mitochondria in cardiomyocytes. It also decreases phosphorylation at Ser-637. Post-translationally, ubiquitination by MARCHF5 affects mitochondrial morphology. In terms of tissue distribution, expressed in the cerebellum and in several regions of the cerebrum and diencephalon. Strongly expressed in the cerebellar Purkinje cells and in the pontile giant neurons. As to expression, widely expressed. Brain-specific. In terms of tissue distribution, brain-specific (at protein level). Expressed in most of the subregions of the brain, including the cerebellum, midbrain, hippocampus, striatum, cerebral cortex, and brain stem. Weakly expressed in the olfactory bulb.

The protein localises to the cytoplasm. It localises to the cytosol. It is found in the golgi apparatus. Its subcellular location is the endomembrane system. The protein resides in the mitochondrion outer membrane. The protein localises to the peroxisome. It localises to the membrane. It is found in the clathrin-coated pit. Its subcellular location is the cytoplasmic vesicle. The protein resides in the secretory vesicle. The protein localises to the synaptic vesicle membrane. It localises to the lysosome. It is found in the late endosome. Its subcellular location is the cell membrane. The protein resides in the postsynaptic density. It carries out the reaction GTP + H2O = GDP + phosphate + H(+). Its function is as follows. Functions in mitochondrial and peroxisomal division. Mediates membrane fission through oligomerization into membrane-associated tubular structures that wrap around the scission site to constrict and sever the mitochondrial membrane through a GTP hydrolysis-dependent mechanism. The specific recruitment at scission sites is mediated by membrane receptors like MFF, MIEF1 and MIEF2 for mitochondrial membranes. While the recruitment by the membrane receptors is GTP-dependent, the following hydrolysis of GTP induces the dissociation from the receptors and allows DNM1L filaments to curl into closed rings that are probably sufficient to sever a double membrane. Acts downstream of PINK1 to promote mitochondrial fission in a PRKN-dependent manner. Plays an important role in mitochondrial fission during mitosis. Required for formation of endocytic vesicles. Through its function in mitochondrial division, ensures the survival of at least some types of postmitotic neurons, including Purkinje cells, by suppressing oxidative damage. Required for normal brain development, including that of cerebellum. Facilitates developmentally regulated apoptosis during neural tube formation. Required for a normal rate of cytochrome c release and caspase activation during apoptosis; this requirement may depend upon the cell type and the physiological apoptotic cues. Proposed to regulate synaptic vesicle membrane dynamics through association with BCL2L1 isoform Bcl-X(L) which stimulates its GTPase activity in synaptic vesicles; the function may require its recruitment by MFF to clathrin-containing vesicles. Required for programmed necrosis execution. Rhythmic control of its activity following phosphorylation at Ser-637 is essential for the circadian control of mitochondrial ATP production. Functionally, regulates postsynaptic clathrin-mediated endocytosis by positioning the endocytic zone at the postsynaptic density, independently of mitochondrial division. In Mus musculus (Mouse), this protein is Dynamin-1-like protein.